The following is a 198-amino-acid chain: NAD(P)H dehydrogenase (quinone) (198 aa).

In terms of domain architecture, Flavodoxin-like spans 4 to 190 (VLVLYYSAYG…EGAKYQGAHV (187 aa)). Residues 10–15 (SAYGHI) and 78–80 (TRF) contribute to the FMN site. Residue tyrosine 12 participates in NAD(+) binding. Tryptophan 98 serves as a coordination point for substrate. FMN-binding positions include 113–119 (SSATQHG) and histidine 134.

This sequence belongs to the WrbA family. Requires FMN as cofactor.

It catalyses the reaction a quinone + NADH + H(+) = a quinol + NAD(+). It carries out the reaction a quinone + NADPH + H(+) = a quinol + NADP(+). The chain is NAD(P)H dehydrogenase (quinone) from Rhizobium johnstonii (strain DSM 114642 / LMG 32736 / 3841) (Rhizobium leguminosarum bv. viciae).